The primary structure comprises 617 residues: Protein fem-1 homolog C (617 aa).

Residue Met-1 is modified to N-acetylmethionine. ANK repeat units lie at residues 2–31, 40–70, 82–111, 115–144, 148–177, 181–210, and 213–242; these read DLKTAVFNAARDGKLRLLTKLLASKSKEEV, NGATPLLMAARYGHLDMVEFLLEQCSASIEV, EGAPPLWAASAAGHLKVVQSLLNHGASVNN, TNSTPLRAACFDGHLEIVKYLVEHKADLEV, HGHTCLMISCYKGHKEIAQYLLEKGADVNR, KGNTALHDCAESGSLDIMKMLLMYCAKMEK, and YGMTPLLSASVTGHTNIVDFLTHHAQTSKT. TPR repeat units lie at residues 245 to 279 and 338 to 371; these read INALELLGATFVDKKRDLLGALKYWKKAMNMRYSD and SYYIRYRGAVYADSGNFKRCINLWKYALDMQQNN. ANK repeat units follow at residues 481 to 523 and 527 to 556; these read NNFS…DVNV and DDNSPLHIAALNNHPDIMNLLIKSGAHFDA.

This sequence belongs to the fem-1 family. In terms of assembly, component of a CRL2 E3 ubiquitin-protein ligase complex, also named ECS (Elongin BC-CUL2/5-SOCS-box protein) complex, composed of CUL2, Elongin BC (ELOB and ELOC), RBX1 and substrate-specific adapter FEM1C.

The protein operates within protein modification; protein ubiquitination. Its function is as follows. Substrate-recognition component of a Cul2-RING (CRL2) E3 ubiquitin-protein ligase complex of the DesCEND (destruction via C-end degrons) pathway, which recognizes a C-degron located at the extreme C terminus of target proteins, leading to their ubiquitination and degradation. The C-degron recognized by the DesCEND pathway is usually a motif of less than ten residues and can be present in full-length proteins, truncated proteins or proteolytically cleaved forms. The CRL2(FEM1C) complex specifically recognizes proteins with an arginine at the C-terminus: recognizes and binds proteins ending with -Lys/Arg-Xaa-Arg and -Lys/Arg-Xaa-Xaa-Arg C-degrons, such as SIL1 or OR51B2, leading to their ubiquitination and degradation. The CRL2(FEM1C) complex mediates ubiquitination and degradation of truncated MSRB1/SEPX1 selenoproteins produced by failed UGA/Sec decoding. This is Protein fem-1 homolog C from Bos taurus (Bovine).